The sequence spans 889 residues: Alanine--tRNA ligase (889 aa).

Zn(2+) is bound by residues His-569, His-573, Cys-671, and His-675.

The protein belongs to the class-II aminoacyl-tRNA synthetase family. Requires Zn(2+) as cofactor.

The protein resides in the cytoplasm. It carries out the reaction tRNA(Ala) + L-alanine + ATP = L-alanyl-tRNA(Ala) + AMP + diphosphate. Its function is as follows. Catalyzes the attachment of alanine to tRNA(Ala) in a two-step reaction: alanine is first activated by ATP to form Ala-AMP and then transferred to the acceptor end of tRNA(Ala). Also edits incorrectly charged Ser-tRNA(Ala) and Gly-tRNA(Ala) via its editing domain. The protein is Alanine--tRNA ligase of Parasynechococcus marenigrum (strain WH8102).